Reading from the N-terminus, the 658-residue chain is Heat shock protein homolog SSE1 (658 aa).

Over residues 614 to 627 the composition is skewed to basic and acidic residues; it reads KRKEEERKSKKENA. Residues 614-658 are disordered; it reads KRKEEERKSKKENAQEGTSSKPESKEESEAKEDNDEESDVASIDE. Residues 642–658 show a composition bias toward acidic residues; it reads EAKEDNDEESDVASIDE.

Belongs to the heat shock protein 70 family.

It localises to the cytoplasm. Required for normal growth at various temperatures. The protein is Heat shock protein homolog SSE1 (SSE1) of Encephalitozoon cuniculi (strain GB-M1) (Microsporidian parasite).